Reading from the N-terminus, the 272-residue chain is Undecaprenyl-diphosphatase (272 aa).

The next 7 helical transmembrane spans lie at Ser6–Ser26, Ala45–Trp65, Thr92–Ile112, Leu115–Ala135, Tyr189–Leu209, Ala221–Ile241, and Ile251–Phe271.

This sequence belongs to the UppP family.

The protein localises to the cell inner membrane. The catalysed reaction is di-trans,octa-cis-undecaprenyl diphosphate + H2O = di-trans,octa-cis-undecaprenyl phosphate + phosphate + H(+). Functionally, catalyzes the dephosphorylation of undecaprenyl diphosphate (UPP). Confers resistance to bacitracin. The chain is Undecaprenyl-diphosphatase from Pectobacterium atrosepticum (strain SCRI 1043 / ATCC BAA-672) (Erwinia carotovora subsp. atroseptica).